Reading from the N-terminus, the 270-residue chain is Aliphatic sulfonates import ATP-binding protein SsuB (270 aa).

The ABC transporter domain maps to 17-238 (LASSGLRKTF…ARGSHRLAAL (222 aa)). An ATP-binding site is contributed by 49 to 56 (GRSGCGKS). The interval 249-270 (APGAAPEPDPVAPLPTQLRWAH) is disordered.

It belongs to the ABC transporter superfamily. Aliphatic sulfonates importer (TC 3.A.1.17.2) family. In terms of assembly, the complex is composed of two ATP-binding proteins (SsuB), two transmembrane proteins (SsuC) and a solute-binding protein (SsuA).

It is found in the cell inner membrane. It catalyses the reaction ATP + H2O + aliphatic sulfonate-[sulfonate-binding protein]Side 1 = ADP + phosphate + aliphatic sulfonateSide 2 + [sulfonate-binding protein]Side 1.. Functionally, part of the ABC transporter complex SsuABC involved in aliphatic sulfonates import. Responsible for energy coupling to the transport system. The protein is Aliphatic sulfonates import ATP-binding protein SsuB of Pseudomonas putida (Arthrobacter siderocapsulatus).